The sequence spans 360 residues: Homeobox-leucine zipper protein HOX21 (360 aa).

Disordered regions lie at residues 25-75 and 88-126; these read QQAA…SSAQ and MLGKRPMSYGDGGGGGDEVNGGGEDELSDDGSQAGEKKR. Residues 36–55 are compositionally biased toward basic residues; that stretch reads HHHHHHHGHHHEQQQHHHHL. Positions 56-68 are enriched in pro residues; it reads GPPPPPPPHPHNP. Residues 97–109 are compositionally biased toward gly residues; the sequence is GDGGGGGDEVNGG. The homeobox DNA-binding region spans 121 to 180; it reads AGEKKRRLNVEQVRTLEKNFELGNKLEPERKMQLARALGLQPRQVAIWFQNRRARWKTKQ. The segment at 179-223 is leucine-zipper; the sequence is KQLEKDYDALKRQLDAVKAENDALLNHNKKLQAEIVALKGREAAS. Disordered stretches follow at residues 233-278 and 299-328; these read EASC…GGGG and GVDIDQLLHSSSGGAGGPKMEHHGGGGNVQ. Over residues 234–246 the composition is skewed to polar residues; that stretch reads ASCSNRSENSSEI.

It belongs to the HD-ZIP homeobox family. Class I subfamily. In terms of tissue distribution, expressed in seedlings, roots, stems, leaf blades and panicles.

It is found in the nucleus. Functionally, probable transcription factor. This Oryza sativa subsp. indica (Rice) protein is Homeobox-leucine zipper protein HOX21 (HOX21).